The following is a 251-amino-acid chain: Elongator complex protein 6 (251 aa).

This sequence belongs to the ELP6 family. As to quaternary structure, component of the elongator complex composed of Elp1, Elp2, Elp3, Elp4, Elp5 and Elp6. The elongator complex associates with and stabilizes microtubules; efficient interaction requires the full complex. Interacts with InR/Insulin-like receptor; the interaction may stabilize Elp6.

Its subcellular location is the cytoplasm. It localises to the nucleus. The protein localises to the cytoskeleton. The protein resides in the spindle. The protein operates within tRNA modification; 5-methoxycarbonylmethyl-2-thiouridine-tRNA biosynthesis. Functionally, component of the elongator complex, which is required for multiple tRNA modifications, including mcm5U (5-methoxycarbonylmethyl uridine), mcm5s2U (5-methoxycarbonylmethyl-2-thiouridine), and ncm5U (5-carbamoylmethyl uridine). The elongator complex catalyzes formation of carboxymethyluridine in the wobble base at position 34 in tRNAs. Binding by the elongator complex stabilizes microtubules and promotes their growth. This induces central spindle asymmetry, promoting polarized signaling endosome trafficking during asymmetric cell division and cell fate assignation of sensory organ precursor cells. Required in germ line cells for microtubule organization involved in oocyte polarization and chromosome organization. Involved in InR-TOR (insulin-like receptor-target of rapamycin) signaling regulation of cellular metabolism, autophagy and apoptosis. The sequence is that of Elongator complex protein 6 from Drosophila melanogaster (Fruit fly).